Consider the following 876-residue polypeptide: Paramyosin (876 aa).

Positions 1 to 28 (MSARSAKFMYRSGNAGASGDLSVEYGTD) are nonhelical region. A coiled-coil region spans residues 29–855 (LGALTRLEDK…IRAKHRSWVT (827 aa)). Positions 856 to 876 (TSQVPGGTRQVFVTQEEQSNY) are nonhelical region.

Belongs to the paramyosin family. Homodimer.

The protein localises to the cytoplasm. Its subcellular location is the myofibril. Functionally, paramyosin is a major structural component of many thick filaments isolated from invertebrate muscles. This Sarcoptes scabiei (Itch mite) protein is Paramyosin.